The sequence spans 395 residues: Tryptophan synthase beta chain (395 aa).

K86 is subject to N6-(pyridoxal phosphate)lysine.

It belongs to the TrpB family. In terms of assembly, tetramer of two alpha and two beta chains. Pyridoxal 5'-phosphate is required as a cofactor.

It catalyses the reaction (1S,2R)-1-C-(indol-3-yl)glycerol 3-phosphate + L-serine = D-glyceraldehyde 3-phosphate + L-tryptophan + H2O. Its pathway is amino-acid biosynthesis; L-tryptophan biosynthesis; L-tryptophan from chorismate: step 5/5. The beta subunit is responsible for the synthesis of L-tryptophan from indole and L-serine. This Psychromonas ingrahamii (strain DSM 17664 / CCUG 51855 / 37) protein is Tryptophan synthase beta chain.